A 385-amino-acid polypeptide reads, in one-letter code: Xanthosine methyltransferase 2 (385 aa).

Y18 is an S-adenosyl-L-homocysteine binding site. 2 residues coordinate xanthosine: N21 and N25. C62, N67, D101, L102, S140, F141, and C157 together coordinate S-adenosyl-L-homocysteine. Residue Y158 coordinates xanthosine. Residue C159 coordinates S-adenosyl-L-homocysteine. Xanthosine contacts are provided by H161 and W162. Mg(2+)-binding residues include N179, D261, F263, and N264. Xanthosine contacts are provided by S329, Y334, and Y369.

It belongs to the methyltransferase superfamily. Type-7 methyltransferase family. The cofactor is Mg(2+). In terms of tissue distribution, expressed at low levels in young leaves but not in mature leaves. Barely detectable in fruits (grains).

It catalyses the reaction xanthosine + S-adenosyl-L-methionine = 7-methylxanthosine + S-adenosyl-L-homocysteine. It participates in alkaloid biosynthesis. Its function is as follows. Involved in the biosynthesis of caffeine. Specific for xanthosine and could not use xanthosine 5'-monophosphate (XMP) as substrate. Catalyzes the 7-N-methylation activity of xanthosine, but does not have 1-N- or 3-N-methylation activity. This chain is Xanthosine methyltransferase 2, found in Coffea arabica (Arabian coffee).